The chain runs to 375 residues: Pectate lyase B (375 aa).

The first 22 residues, 1–22 (MKSLITPIAAGLLLAFSQYSLA), serve as a signal peptide directing secretion. The cysteines at positions 93 and 176 are disulfide-linked. The Ca(2+) site is built by D150, D152, E187, and D191. Residue R240 is part of the active site. C351 and C374 are joined by a disulfide.

This sequence belongs to the polysaccharide lyase 1 family. PLADES subfamily. The cofactor is Ca(2+).

It is found in the secreted. It catalyses the reaction Eliminative cleavage of (1-&gt;4)-alpha-D-galacturonan to give oligosaccharides with 4-deoxy-alpha-D-galact-4-enuronosyl groups at their non-reducing ends.. It participates in glycan metabolism; pectin degradation; 2-dehydro-3-deoxy-D-gluconate from pectin: step 2/5. Involved in maceration and soft-rotting of plant tissue. In Dickeya chrysanthemi (Pectobacterium chrysanthemi), this protein is Pectate lyase B (pelB).